The sequence spans 608 residues: Dolichyl-diphosphooligosaccharide--protein glycosyltransferase subunit 1 (608 aa).

The first 25 residues, 1 to 25 (MESPVALLLLLLLCLGALAPTPGSA), serve as a signal peptide directing secretion. The Lumenal segment spans residues 26–440 (SSEAPPLVNE…FNKVLMLQEP (415 aa)). Lys-188 carries the post-translational modification N6-acetyllysine. An N-linked (GlcNAc...) asparagine glycan is attached at Asn-300. The chain crosses the membrane as a helical span at residues 441 to 458 (LLVVAAFYILFFTVIIYV). Residues 459–608 (RLDFSITKDP…TKIDHILDAL (150 aa)) are Cytoplasmic-facing. Position 539 is an N6-acetyllysine; alternate (Lys-539). Lys-539 is covalently cross-linked (Glycyl lysine isopeptide (Lys-Gly) (interchain with G-Cter in SUMO2); alternate).

It belongs to the OST1 family. As to quaternary structure, component of the oligosaccharyltransferase (OST) complex. OST exists in two different complex forms which contain common core subunits RPN1, RPN2, OST48, OST4, DAD1 and TMEM258, either STT3A or STT3B as catalytic subunits, and form-specific accessory subunits. STT3A complex assembly occurs through the formation of 3 subcomplexes. Subcomplex 1 contains RPN1 and TMEM258, subcomplex 2 contains the STT3A-specific subunits STT3A, DC2/OSTC, and KCP2 as well as the core subunit OST4, and subcomplex 3 contains RPN2, DAD1, and OST48. The STT3A complex can form stable complexes with the Sec61 complex or with both the Sec61 and TRAP complexes. Interacts with TMEM35A/NACHO. In terms of processing, ubiquitinated by the ECS(ASB11) complex. Ubiquitinated by RNF128, leading to degradation in a proteasome/lysosome-dependent manner. Post-translationally, ufmylated by UFL1 in response to endoplasmic reticulum stress, promoting reticulophagy of endoplasmic reticulum sheets.

The protein resides in the endoplasmic reticulum membrane. The protein operates within protein modification; protein glycosylation. Its function is as follows. Subunit of the oligosaccharyl transferase (OST) complex that catalyzes the initial transfer of a defined glycan (Glc(3)Man(9)GlcNAc(2) in eukaryotes) from the lipid carrier dolichol-pyrophosphate to an asparagine residue within an Asn-X-Ser/Thr consensus motif in nascent polypeptide chains, the first step in protein N-glycosylation. N-glycosylation occurs cotranslationally and the complex associates with the Sec61 complex at the channel-forming translocon complex that mediates protein translocation across the endoplasmic reticulum (ER). All subunits are required for a maximal enzyme activity. This Mus musculus (Mouse) protein is Dolichyl-diphosphooligosaccharide--protein glycosyltransferase subunit 1.